We begin with the raw amino-acid sequence, 267 residues long: Regulatory protein RecX (267 aa).

The protein belongs to the RecX family.

It is found in the cytoplasm. Functionally, modulates RecA activity. The chain is Regulatory protein RecX from Leuconostoc mesenteroides subsp. mesenteroides (strain ATCC 8293 / DSM 20343 / BCRC 11652 / CCM 1803 / JCM 6124 / NCDO 523 / NBRC 100496 / NCIMB 8023 / NCTC 12954 / NRRL B-1118 / 37Y).